Consider the following 368-residue polypeptide: UPF0284 protein SYNPCC7002_A1742 (368 aa).

This sequence belongs to the UPF0284 family.

The chain is UPF0284 protein SYNPCC7002_A1742 from Picosynechococcus sp. (strain ATCC 27264 / PCC 7002 / PR-6) (Agmenellum quadruplicatum).